The primary structure comprises 644 residues: SPbeta prophage-derived uncharacterized protein YomE (644 aa).

This chain is SPbeta prophage-derived uncharacterized protein YomE (yomE), found in Bacillus subtilis (strain 168).